The primary structure comprises 941 residues: Pre-mRNA-processing factor 6 (941 aa).

The interval 1-79 is disordered; the sequence is MNKKKKPFLG…DEDLNDTNYD (79 aa). Positions 39–65 are enriched in basic and acidic residues; that stretch reads DANDPVDDRHAPPGKRTVGDQMKKNQA. Residues 66–78 are compositionally biased toward acidic residues; that stretch reads ADDDDEDLNDTNY. A Phosphoserine modification is found at serine 143. 3 positions are modified to phosphothreonine: threonine 180, threonine 266, and threonine 275. Serine 279 is subject to Phosphoserine. HAT repeat units lie at residues 384–416, 418–444, 445–476, 554–586, 588–620, 622–654, 689–721, 723–755, and 855–887; these read TDIR…LEEP, DARI…ARLE, TYEN…LEEA, NALE…FEKN, GTRE…SKWL, GDVP…LESE, DNIR…IEEQ, EMME…LEEK, and RKIT…FELQ.

In terms of assembly, identified in the spliceosome B complex. Identified in the spliceosome C complex. Associates with the U5 snRNP particle. Component of the U4/U6-U5 tri-snRNP complex composed of the U4, U6 and U5 snRNAs and at least PRPF3, PRPF4, PRPF6, PRPF8, PRPF31, SNRNP200, TXNL4A, SNRNP40, DDX23, CD2BP2, PPIH, SNU13, EFTUD2, SART1 and USP39, LSm proteins LSm2-8 and Sm proteins. Interacts with ARAF. Interacts with AR and NR3C1, but not ESR1, independently of the presence of hormones. Interacts with USH1G. Post-translationally, phosphorylated by PRP4K during spliceosome assembly. Widely expressed.

Its subcellular location is the nucleus. The protein localises to the nucleoplasm. It localises to the nucleus speckle. In terms of biological role, involved in pre-mRNA splicing as component of the U4/U6-U5 tri-snRNP complex, one of the building blocks of the spliceosome. Enhances dihydrotestosterone-induced transactivation activity of AR, as well as dexamethasone-induced transactivation activity of NR3C1, but does not affect estrogen-induced transactivation. In Homo sapiens (Human), this protein is Pre-mRNA-processing factor 6.